A 642-amino-acid chain; its full sequence is Threonine--tRNA ligase (642 aa).

The TGS domain occupies 1–61 (MPVITLPDGS…ENDAQLSIIT (61 aa)). A catalytic region spans residues 243–534 (DHRKIGKQLD…LTEEFAGFFP (292 aa)). Lys-286 is modified (N6-acetyllysine). Residues Cys-334, His-385, and His-511 each coordinate Zn(2+).

The protein belongs to the class-II aminoacyl-tRNA synthetase family. In terms of assembly, homodimer. Zn(2+) serves as cofactor.

The protein resides in the cytoplasm. The enzyme catalyses tRNA(Thr) + L-threonine + ATP = L-threonyl-tRNA(Thr) + AMP + diphosphate + H(+). Functionally, catalyzes the attachment of threonine to tRNA(Thr) in a two-step reaction: L-threonine is first activated by ATP to form Thr-AMP and then transferred to the acceptor end of tRNA(Thr). Also edits incorrectly charged L-seryl-tRNA(Thr). The polypeptide is Threonine--tRNA ligase (Escherichia coli O9:H4 (strain HS)).